A 111-amino-acid polypeptide reads, in one-letter code: Protein GLUTAMINE DUMPER 6 (111 aa).

The Extracellular segment spans residues 1–16 (MRPTPKVEIWKSPVPY). A helical transmembrane segment spans residues 17 to 37 (LFGGLFLLVLLIALALLSLVC). Residues 38–111 (THQKPSSSSN…NCDNVTVIST (74 aa)) are Cytoplasmic-facing. The segment covering 40–49 (QKPSSSSNNN) has biased composition (polar residues). Residues 40–63 (QKPSSSSNNNHMDEEDDVGDKDAK) form a disordered region. The VIMAG; degenerate signature appears at 75 to 79 (VILAG).

Belongs to the GLUTAMINE DUMPER 1 (TC 9.B.60) family. Expressed in the vascular tissues.

The protein localises to the membrane. In terms of biological role, probable subunit of an amino acid transporter involved in the regulation of the amino acid metabolism. Stimulates amino acid export by activating nonselective amino acid facilitators. The sequence is that of Protein GLUTAMINE DUMPER 6 (GDU6) from Arabidopsis thaliana (Mouse-ear cress).